Reading from the N-terminus, the 180-residue chain is Large ribosomal subunit protein uL5 (180 aa).

This sequence belongs to the universal ribosomal protein uL5 family. Part of the 50S ribosomal subunit; part of the 5S rRNA/L5/L18/L25 subcomplex. Contacts the 5S rRNA and the P site tRNA. Forms a bridge to the 30S subunit in the 70S ribosome.

This is one of the proteins that bind and probably mediate the attachment of the 5S RNA into the large ribosomal subunit, where it forms part of the central protuberance. In the 70S ribosome it contacts protein S13 of the 30S subunit (bridge B1b), connecting the 2 subunits; this bridge is implicated in subunit movement. Contacts the P site tRNA; the 5S rRNA and some of its associated proteins might help stabilize positioning of ribosome-bound tRNAs. The protein is Large ribosomal subunit protein uL5 of Clostridium botulinum (strain ATCC 19397 / Type A).